The primary structure comprises 386 residues: Protein-glutamate methylesterase/protein-glutamine glutaminase (386 aa).

The Response regulatory domain occupies 4–121 (KVLVVDDSAF…ARNRDEAVKT (118 aa)). 4-aspartylphosphate is present on Asp55. The segment at 133–161 (PVSRTSARASTPPPVAKQPERSSEPTTAL) is disordered. Residues 190–384 (INRAYQLLAI…KAIMKEVGYS (195 aa)) enclose the CheB-type methylesterase domain. Active-site residues include Ser202, His229, and Asp326.

It belongs to the CheB family. Post-translationally, phosphorylated by CheA. Phosphorylation of the N-terminal regulatory domain activates the methylesterase activity.

It localises to the cytoplasm. It catalyses the reaction [protein]-L-glutamate 5-O-methyl ester + H2O = L-glutamyl-[protein] + methanol + H(+). The enzyme catalyses L-glutaminyl-[protein] + H2O = L-glutamyl-[protein] + NH4(+). Involved in chemotaxis. Part of a chemotaxis signal transduction system that modulates chemotaxis in response to various stimuli. Catalyzes the demethylation of specific methylglutamate residues introduced into the chemoreceptors (methyl-accepting chemotaxis proteins or MCP) by CheR. Also mediates the irreversible deamidation of specific glutamine residues to glutamic acid. The protein is Protein-glutamate methylesterase/protein-glutamine glutaminase of Idiomarina loihiensis (strain ATCC BAA-735 / DSM 15497 / L2-TR).